Consider the following 76-residue polypeptide: uncharacterized protein (76 aa).

The next 2 helical transmembrane spans lie at 9 to 29 and 45 to 65; these read AIGI…LQAV and LLMI…FLDY.

Its subcellular location is the cell membrane. This is an uncharacterized protein from Bacillus subtilis (strain 168).